We begin with the raw amino-acid sequence, 212 residues long: Ribosomal RNA small subunit methyltransferase G (212 aa).

S-adenosyl-L-methionine-binding positions include Gly-80, Leu-85, 131-132, and Arg-146; that span reads AE.

The protein belongs to the methyltransferase superfamily. RNA methyltransferase RsmG family.

Its subcellular location is the cytoplasm. The enzyme catalyses guanosine(527) in 16S rRNA + S-adenosyl-L-methionine = N(7)-methylguanosine(527) in 16S rRNA + S-adenosyl-L-homocysteine. Functionally, specifically methylates the N7 position of guanine in position 527 of 16S rRNA. This chain is Ribosomal RNA small subunit methyltransferase G, found in Stenotrophomonas maltophilia (strain R551-3).